An 812-amino-acid chain; its full sequence is Valine--tRNA ligase (812 aa).

The 'HIGH' region motif lies at 46–56 (PTVSGQLHIGH). Residues 536 to 540 (KMSKS) carry the 'KMSKS' region motif. An ATP-binding site is contributed by K539.

The protein belongs to the class-I aminoacyl-tRNA synthetase family. ValS type 2 subfamily. As to quaternary structure, monomer.

The protein resides in the cytoplasm. It catalyses the reaction tRNA(Val) + L-valine + ATP = L-valyl-tRNA(Val) + AMP + diphosphate. Its function is as follows. Catalyzes the attachment of valine to tRNA(Val). As ValRS can inadvertently accommodate and process structurally similar amino acids such as threonine, to avoid such errors, it has a 'posttransfer' editing activity that hydrolyzes mischarged Thr-tRNA(Val) in a tRNA-dependent manner. This Rickettsia bellii (strain RML369-C) protein is Valine--tRNA ligase.